A 550-amino-acid chain; its full sequence is Dipeptide-binding protein (550 aa).

A signal peptide spans 1-22; sequence MKQAKIIGLSTVIALSGIILVA. The N-palmitoyl cysteine moiety is linked to residue C23. C23 carries the S-diacylglycerol cysteine lipid modification.

Belongs to the bacterial solute-binding protein 5 family. The complex is composed of two ATP-binding proteins (DppD and DppF), two transmembrane proteins (DppB and DppC) and a solute-binding protein (DppA).

It is found in the cell membrane. Its function is as follows. Part of the ABC transporter DppABCDF involved in dipeptide transport. Binds di- and tripeptides with high affinity. Requires a free N-terminal alpha-amino group and an alpha-peptide bound contiguous with the N-terminal amino group, has a strong selectivity for L-residues, and shows preference for dipeptides containing methionine or arginine, followed by hydrophobic tripeptides consisting of leucine or valine residues. The chain is Dipeptide-binding protein from Lactococcus lactis subsp. cremoris (strain MG1363).